Here is a 341-residue protein sequence, read N- to C-terminus: HTH-type transcriptional repressor PurR (341 aa).

In terms of domain architecture, HTH lacI-type spans 2–56; that stretch reads ATIKDVAKRANVSTTTVSHVINKTRFVAEETRNAVWAAIKELHYSPSAVARSLKV. A DNA-binding region (H-T-H motif) is located at residues 4–23; that stretch reads IKDVAKRANVSTTTVSHVIN. A DNA-binding region spans residues 48–56; it reads SAVARSLKV. The hypoxanthine site is built by Tyr-73, Arg-190, Thr-192, Phe-221, and Asp-275.

Homodimer.

Its pathway is purine metabolism; purine nucleotide biosynthesis [regulation]. Its function is as follows. Is the main repressor of the genes involved in the de novo synthesis of purine nucleotides, regulating purB, purC, purEK, purF, purHD, purL, purMN and guaBA expression. PurR is allosterically activated to bind its cognate DNA by binding the purine corepressors, hypoxanthine or guanine, thereby effecting transcription repression. This chain is HTH-type transcriptional repressor PurR, found in Salmonella arizonae (strain ATCC BAA-731 / CDC346-86 / RSK2980).